The primary structure comprises 95 residues: Small ribosomal subunit protein bS6 (95 aa).

This sequence belongs to the bacterial ribosomal protein bS6 family.

Its function is as follows. Binds together with bS18 to 16S ribosomal RNA. This Thermoanaerobacter pseudethanolicus (strain ATCC 33223 / 39E) (Clostridium thermohydrosulfuricum) protein is Small ribosomal subunit protein bS6.